The following is a 237-amino-acid chain: Endonuclease V (237 aa).

Residues aspartate 46 and aspartate 114 each contribute to the Mg(2+) site.

It belongs to the endonuclease V family. Mg(2+) serves as cofactor.

It localises to the cytoplasm. It carries out the reaction Endonucleolytic cleavage at apurinic or apyrimidinic sites to products with a 5'-phosphate.. In terms of biological role, DNA repair enzyme involved in the repair of deaminated bases. Selectively cleaves double-stranded DNA at the second phosphodiester bond 3' to a deoxyinosine leaving behind the intact lesion on the nicked DNA. This chain is Endonuclease V, found in Xanthomonas oryzae pv. oryzae (strain PXO99A).